Reading from the N-terminus, the 496-residue chain is Hemophilin secretion modulator (496 aa).

The N-terminal stretch at M1–A19 is a signal peptide. Transmembrane regions (beta stranded) follow at residues W198–Y208, D253–A263, H268–F277, T291–F301, N305–H315, W327–I337, K341–D351, S365–I374, T380–D389, Q403–W413, N418–W427, Q446–P455, M462–H472, and H486–R495.

This sequence belongs to the Slam family.

The protein resides in the cell outer membrane. Functionally, part of a high affinity heme acquisition system. Mediates the secretion of the hemophilin HphA across the outer membrane into the extracellular environment. Plays a supporting role for full virulence. This is Hemophilin secretion modulator from Acinetobacter baumannii.